Here is a 206-residue protein sequence, read N- to C-terminus: Flavin reductase (NADPH) (206 aa).

NADP(+) is bound by residues glycine 10, threonine 12, glycine 13, glutamine 14, threonine 15, arginine 35, serine 38, and arginine 39. Position 42 is a phosphoserine (serine 42). NADP(+) contacts are provided by aspartate 54, valine 55, leucine 75, glycine 76, and arginine 78. The residue at position 82 (serine 82) is a Phosphoserine. Methionine 87, cysteine 109, histidine 132, histidine 153, and isoleucine 154 together coordinate NADP(+). The S-nitroso-cysteine intermediate; for S-nitroso-CoA-dependent nitrosyltransferase activity role is filled by cysteine 109. Residue cysteine 188 is the S-nitroso-cysteine intermediate; for S-nitroso-CoA-dependent nitrosyltransferase activity of the active site.

The protein belongs to the BLVRB family. In terms of assembly, monomer. In terms of tissue distribution, predominantly expressed in liver and erythrocytes. At lower levels in heart, lung, adrenal gland and cerebrum. Expressed in adult red blood cells.

It is found in the cytoplasm. It carries out the reaction reduced riboflavin + NADP(+) = riboflavin + NADPH + 2 H(+). It catalyses the reaction bilirubin IXbeta + NADP(+) = biliverdin IXbeta + NADPH + H(+). The enzyme catalyses FMNH2 + NAD(+) = FMN + NADH + 2 H(+). The catalysed reaction is FMNH2 + NADP(+) = FMN + NADPH + 2 H(+). It carries out the reaction S-nitroso-CoA + L-cysteinyl-[protein] = S-nitroso-L-cysteinyl-[protein] + CoA. It catalyses the reaction L-cysteinyl-[SCAN] + S-nitroso-CoA = S-nitroso-L-cysteinyl-[SCAN] + CoA. The enzyme catalyses S-nitroso-L-cysteinyl-[SCAN] + L-cysteinyl-[protein] = L-cysteinyl-[SCAN] + S-nitroso-L-cysteinyl-[protein]. Its activity is regulated as follows. Mesobiliverdin acts as a competitive inhibitor for flavin reduction, indicating that flavin and tetrapyrrole substrates compete for the same site. Inhibited by a wide range of xanthene-based drugs, such as phloxine B, erythrosin B, tamibarotene, sulfasalazine, olsalazine, febuxostat, ataluren (PTC124) and deferasirox. Functionally, enzyme that can both act as a NAD(P)H-dependent reductase and a S-nitroso-CoA-dependent nitrosyltransferase. Promotes fetal heme degradation during development. Also expressed in adult tissues, where it acts as a regulator of hematopoiesis, intermediary metabolism (glutaminolysis, glycolysis, TCA cycle and pentose phosphate pathway) and insulin signaling. Has a broad specificity oxidoreductase activity by catalyzing the NAD(P)H-dependent reduction of a variety of flavins, such as riboflavin, FAD or FMN, biliverdins, methemoglobin and PQQ (pyrroloquinoline quinone). Contributes to fetal heme catabolism by catalyzing reduction of biliverdin IXbeta into bilirubin IXbeta in the liver. Biliverdin IXbeta, which constitutes the major heme catabolite in the fetus is not present in adult. Does not reduce bilirubin IXalpha. Can also reduce the complexed Fe(3+) iron to Fe(2+) in the presence of FMN and NADPH. Acts as a protein nitrosyltransferase by catalyzing nitrosylation of cysteine residues of target proteins, such as HMOX2, INSR and IRS1. S-nitroso-CoA-dependent nitrosyltransferase activity is mediated via a 'ping-pong' mechanism: BLVRB first associates with both S-nitroso-CoA and protein substrate, nitric oxide group is then transferred from S-nitroso-CoA to Cys-109 and Cys-188 residues of BLVRB and from S-nitroso-BLVRB to the protein substrate. Inhibits insulin signaling by mediating nitrosylation of INSR and IRS1, leading to their inhibition. This chain is Flavin reductase (NADPH), found in Homo sapiens (Human).